The chain runs to 194 residues: MRTATKTRITAETSIELSINLDSQAESIISTGVGFLDHMLTLFAKHSRITLNVKADGDTYIDAHHTVEDIGITLGLCLKEALADKASINRYGSAYVPMDESLGFCALDLSGRSYLVFDAELTNPKLGDFDTELVEEFFQAVAFNTEMNLHLRVLYGKNTHHKIEALFKAFGRALREAITINPEIKGVNSTKGVL.

Belongs to the imidazoleglycerol-phosphate dehydratase family.

The protein resides in the cytoplasm. The enzyme catalyses D-erythro-1-(imidazol-4-yl)glycerol 3-phosphate = 3-(imidazol-4-yl)-2-oxopropyl phosphate + H2O. Its pathway is amino-acid biosynthesis; L-histidine biosynthesis; L-histidine from 5-phospho-alpha-D-ribose 1-diphosphate: step 6/9. This Listeria monocytogenes serotype 4b (strain F2365) protein is Imidazoleglycerol-phosphate dehydratase.